A 465-amino-acid chain; its full sequence is Fumarate hydratase class II (465 aa).

Substrate is bound by residues 99–101 (SGT), 130–133 (HPND), 140–142 (STN), and Thr-188. His-189 acts as the Proton donor/acceptor in catalysis. Residue Ser-319 is part of the active site. Substrate is bound by residues Ser-320 and 325 to 327 (KVN).

The protein belongs to the class-II fumarase/aspartase family. Fumarase subfamily. Homotetramer.

It is found in the cytoplasm. It catalyses the reaction (S)-malate = fumarate + H2O. Its pathway is carbohydrate metabolism; tricarboxylic acid cycle; (S)-malate from fumarate: step 1/1. Involved in the TCA cycle. Catalyzes the stereospecific interconversion of fumarate to L-malate. This chain is Fumarate hydratase class II, found in Prochlorococcus marinus (strain SARG / CCMP1375 / SS120).